A 329-amino-acid chain; its full sequence is Ficolin-2 (329 aa).

The signal sequence occupies residues 1–29 (MELGGAAGALGPSGPLLVCLCFGTLAAQA). The Collagen-like domain occupies 52–111 (GCPGLPGAPGLKGETGAAGLKGERGLPGVPGKAGPAGPKGSTGAQGEKGARGEKGESGQL). Residues 64-113 (GETGAAGLKGERGLPGVPGKAGPAGPKGSTGAQGEKGARGEKGESGQLHS) are disordered. Residues 77–90 (LPGVPGKAGPAGPK) show a composition bias toward low complexity. Residues 112 to 329 (HSCATGPRTC…KVSEMKLRLT (218 aa)) enclose the Fibrinogen C-terminal domain. 2 cysteine pairs are disulfide-bonded: Cys114–Cys142 and Cys121–Cys149. Ca(2+)-binding residues include Asp265, Asp267, Ser269, and Ser271. A disulfide bridge links Cys273 with Cys286. Asn316 is a glycosylation site (N-linked (GlcNAc...) asparagine).

This sequence belongs to the ficolin lectin family. In terms of assembly, homotrimer. Interacts with elastin. Interacts with MASP1 and MASP2.

The protein localises to the secreted. Functionally, may function in innate immunity through activation of the lectin complement pathway. Calcium-dependent and GlcNAc-binding lectin. This Bos taurus (Bovine) protein is Ficolin-2 (FCN2).